We begin with the raw amino-acid sequence, 462 residues long: Glutamate--tRNA ligase (462 aa).

Positions 11 to 21 match the 'HIGH' region motif; that stretch reads PSPTGFIHLGN. The 'KMSKS' region signature appears at 243 to 247; the sequence is KMSKR. Lys246 is a binding site for ATP.

This sequence belongs to the class-I aminoacyl-tRNA synthetase family. Glutamate--tRNA ligase type 1 subfamily. As to quaternary structure, monomer.

The protein resides in the cytoplasm. It carries out the reaction tRNA(Glu) + L-glutamate + ATP = L-glutamyl-tRNA(Glu) + AMP + diphosphate. Catalyzes the attachment of glutamate to tRNA(Glu) in a two-step reaction: glutamate is first activated by ATP to form Glu-AMP and then transferred to the acceptor end of tRNA(Glu). The chain is Glutamate--tRNA ligase from Albidiferax ferrireducens (strain ATCC BAA-621 / DSM 15236 / T118) (Rhodoferax ferrireducens).